Consider the following 234-residue polypeptide: Hydrolase in agr operon (234 aa).

Residues 1–212 (ILYNKDTDVV…EKELTVTIDI (212 aa)) form the CN hydrolase domain. Catalysis depends on Glu-14, which acts as the Proton acceptor. Lys-83 acts as the Proton donor in catalysis. Residue Cys-119 is the Nucleophile of the active site.

It belongs to the carbon-nitrogen hydrolase superfamily. NIT1/NIT2 family.

The protein is Hydrolase in agr operon of Staphylococcus lugdunensis.